We begin with the raw amino-acid sequence, 686 residues long: MAM domain-containing protein 2 (686 aa).

Residues 1 to 18 form the signal peptide; the sequence is MLLEGVLLVVQALQLASA. 4 consecutive MAM domains span residues 24–169, 168–329, 340–498, and 507–666; these read GSCA…YCIE, IECD…HCQN, TSCD…NCRS, and GECT…PCAG. Residues Asn-134 and Asn-329 are each glycosylated (N-linked (GlcNAc...) asparagine). Asn-524 is a glycosylation site (N-linked (GlcNAc...) asparagine). The segment at 665–686 is disordered; that stretch reads AGMEDTTEQSSGYSEDLNEIEY.

In terms of processing, O-glycosylated; contains chondroitin sulfate.

It localises to the secreted. It is found in the extracellular space. The protein resides in the extracellular matrix. In Mus musculus (Mouse), this protein is MAM domain-containing protein 2 (Mamdc2).